Reading from the N-terminus, the 542-residue chain is Phenylalanine--tRNA ligase beta subunit (542 aa).

A B5 domain is found at 269 to 344; the sequence is LRRYTVSVSA…MTIGYDKLSP (76 aa). Positions 322, 328, 331, and 332 each coordinate Mg(2+).

It belongs to the phenylalanyl-tRNA synthetase beta subunit family. Type 2 subfamily. Tetramer of two alpha and two beta subunits. Mg(2+) is required as a cofactor.

It is found in the cytoplasm. The catalysed reaction is tRNA(Phe) + L-phenylalanine + ATP = L-phenylalanyl-tRNA(Phe) + AMP + diphosphate + H(+). In Sulfolobus acidocaldarius (strain ATCC 33909 / DSM 639 / JCM 8929 / NBRC 15157 / NCIMB 11770), this protein is Phenylalanine--tRNA ligase beta subunit.